The primary structure comprises 104 residues: Replication restart protein PriB (104 aa).

One can recognise an SSB domain in the interval 1–101 (MTNRLTLSGT…LHAEQIELID (101 aa)).

This sequence belongs to the PriB family. In terms of assembly, homodimer. Interacts with PriA and DnaT. Component of the replication restart primosome. Primosome assembly occurs via a 'hand-off' mechanism. PriA binds to replication forks, subsequently PriB then DnaT bind; DnaT then displaces ssDNA to generate the helicase loading substrate.

In terms of biological role, involved in the restart of stalled replication forks, which reloads the replicative helicase on sites other than the origin of replication; the PriA-PriB pathway is the major replication restart pathway. During primosome assembly it facilitates complex formation between PriA and DnaT on DNA; stabilizes PriA on DNA. Stimulates the DNA unwinding activity of PriA helicase. The chain is Replication restart protein PriB from Salmonella typhi.